Consider the following 130-residue polypeptide: Small ribosomal subunit protein uS8 (130 aa).

Belongs to the universal ribosomal protein uS8 family. As to quaternary structure, part of the 30S ribosomal subunit. Contacts proteins S5 and S12.

In terms of biological role, one of the primary rRNA binding proteins, it binds directly to 16S rRNA central domain where it helps coordinate assembly of the platform of the 30S subunit. In Shewanella denitrificans (strain OS217 / ATCC BAA-1090 / DSM 15013), this protein is Small ribosomal subunit protein uS8.